The following is a 159-amino-acid chain: UPF0336 protein MAP_4107 (159 aa).

Belongs to the UPF0336 family.

This chain is UPF0336 protein MAP_4107, found in Mycolicibacterium paratuberculosis (strain ATCC BAA-968 / K-10) (Mycobacterium paratuberculosis).